Here is a 303-residue protein sequence, read N- to C-terminus: Coenzyme PQQ synthesis protein B (303 aa).

The protein belongs to the PqqB family.

It participates in cofactor biosynthesis; pyrroloquinoline quinone biosynthesis. Functionally, may be involved in the transport of PQQ or its precursor to the periplasm. The polypeptide is Coenzyme PQQ synthesis protein B (Pseudomonas savastanoi pv. phaseolicola (strain 1448A / Race 6) (Pseudomonas syringae pv. phaseolicola (strain 1448A / Race 6))).